We begin with the raw amino-acid sequence, 904 residues long: E3 SUMO-protein ligase SIZ1 (904 aa).

A compositionally biased stretch (acidic residues) spans 1-13 (MINLEDYWEDETP). Residues 1-21 (MINLEDYWEDETPGPDREPTN) are disordered. One can recognise an SAP domain in the interval 34-68 (MELLKVSELKDICRSVSFPVSGRKAVLQDLIRNFL). The tract at residues 122 to 170 (MEGPPTVQQQSPSVIRQSPTQRRKTSTTSSTSRAPPPTNPDASSSSSSF) is disordered. Positions 127–136 (TVQQQSPSVI) are enriched in polar residues. Phosphoserine is present on Ser-132. The span at 137 to 154 (RQSPTQRRKTSTTSSTSR) shows a compositional bias: low complexity. The region spanning 162–314 (DASSSSSSFA…KLFGYIVEMI (153 aa)) is the PINIT domain. An SP-RING-type zinc finger spans residues 344 to 431 (EDEEMGLTTT…LQNCQKNVEQ (88 aa)). Residues Cys-377, His-379, Cys-400, and Cys-403 each contribute to the Zn(2+) site. 3 disordered regions span residues 443–584 (ILED…DDDR), 596–616 (STNT…TLDP), and 672–733 (SPDV…ISDS). Over residues 444 to 454 (LEDDDDSDSDS) the composition is skewed to acidic residues. Residues 501-511 (NNHDDSNRHSN) are compositionally biased toward basic and acidic residues. The segment covering 512–553 (DNNNNSIKNNDSHNKNNNNNNNNNNNNNDNNNSIENNDSNSN) has biased composition (low complexity). Polar residues-rich tracts occupy residues 561 to 574 (RSNT…KNLM), 596 to 611 (STNT…SAPS), and 672 to 683 (SPDVSVSSPTPR). Residues 684 to 699 (NTASNASSSALSTPPL) show a composition bias toward low complexity. The span at 721-733 (INSNSYTASISDS) shows a compositional bias: polar residues. Ser-794 is modified (phosphoserine). A required for localization at the bud neck region spans residues 794–904 (SLPTTEAITR…QDYGKKYNSG (111 aa)). A compositionally biased stretch (polar residues) spans 877–894 (RQLSNTSSTSPIMGTWKT). The disordered stretch occupies residues 877 to 904 (RQLSNTSSTSPIMGTWKTQDYGKKYNSG).

It belongs to the PIAS family. In terms of assembly, interacts with UBC9 and CDC3. Phosphorylated in early M-phase. In terms of processing, autosumoylated upon ethanol stress.

It is found in the cytoplasm. Its subcellular location is the nucleus. The protein resides in the bud neck. It functions in the pathway protein modification; protein sumoylation. Functionally, acts as an E3 ligase mediating SUMO/Smt3 attachment to septins and PCNA. May be involved in chromosome maintenance. The sequence is that of E3 SUMO-protein ligase SIZ1 (SIZ1) from Saccharomyces cerevisiae (strain ATCC 204508 / S288c) (Baker's yeast).